A 413-amino-acid polypeptide reads, in one-letter code: Palmitoyltransferase ZDHHC6 (413 aa).

Residues 1 to 24 lie on the Cytoplasmic side of the membrane; the sequence is MGIFCSVIKFENLQDLRRLCHWGP. The helical transmembrane segment at 25 to 45 threads the bilayer; that stretch reads IIALGVIAICSTMAMIDSVLW. At 46–57 the chain is on the lumenal side; that stretch reads YWPLHTTGGSVN. Residues 58–78 form a helical membrane-spanning segment; sequence FIMLINWTVMILYNYFNAMFA. The Cytoplasmic segment spans residues 79–143; the sequence is GPGFVPRGWK…NCCGHQNHAS (65 aa). Residues 99-149 form the DHHC domain; the sequence is QYCKVCQAYKAPRSHHCRKCNRCVMKMDHHCPWINNCCGHQNHASFTLFLL. Residue Cys-129 is the S-palmitoyl cysteine intermediate of the active site. Residues 144 to 164 traverse the membrane as a helical segment; sequence FTLFLLLAPLGCTHAAFIFVM. The Lumenal portion of the chain corresponds to 165-194; the sequence is TMYTQLYNRLSFGWNTVKIDMSAARRDPPP. Residues 195–215 traverse the membrane as a helical segment; sequence IVPFGLAAFAATLFALGLALG. Over 216 to 413 the chain is Cytoplasmic; the sequence is TTIAVGMLFF…PAPEGEKKNR (198 aa). An SH3 domain is found at 313 to 398; the sequence is VRSVRYKVIE…PRNCVEKCPC (86 aa). S-palmitoyl cysteine attachment occurs at residues Cys-328, Cys-329, and Cys-343. The Di-lysine motif motif lies at 410–413; that stretch reads KKNR.

Belongs to the DHHC palmitoyltransferase family. In terms of assembly, homooligomerizes. Interacts with SELENOK. In terms of processing, palmitoylated at 3 different sites by ZDHHC16. The combination of the different palmitoylation events strongly affects the quaternary assembly of ZDHHC6, its localization, stability and function. Palmitoylation at Cys-328 accelerates the turnover of ZDHHC6. Depalmitoylated by LYPLA2.

Its subcellular location is the endoplasmic reticulum membrane. It carries out the reaction L-cysteinyl-[protein] + hexadecanoyl-CoA = S-hexadecanoyl-L-cysteinyl-[protein] + CoA. The catalysed reaction is L-cysteinyl-[protein] + octadecanoyl-CoA = S-octadecanoyl-L-cysteinyl-[protein] + CoA. Endoplasmic reticulum palmitoyl acyltransferase that mediates palmitoylation of proteins such as AMFR, CALX, ITPR1 and TFRC. Palmitoylates calnexin (CALX), which is required for its association with the ribosome-translocon complex and efficient folding of glycosylated proteins. Mediates palmitoylation of AMFR, promoting AMFR distribution to the peripheral endoplasmic reticulum. Together with SELENOK, palmitoylates ITPR1 in immune cells, leading to regulate ITPR1 stability and function. Stearoyltransferase that mediates stearoylation of TFRC to inhibit TFRC-mediated activation of the JNK pathway and mitochondrial fragmentation. The protein is Palmitoyltransferase ZDHHC6 of Mus musculus (Mouse).